We begin with the raw amino-acid sequence, 284 residues long: Protease HtpX homolog (284 aa).

The next 2 helical transmembrane spans lie at 7 to 26 (TYLL…MMLH) and 33 to 47 (IILA…YYMS). His-129 is a Zn(2+) binding site. The active site involves Glu-130. Zn(2+) is bound at residue His-133. Transmembrane regions (helical) follow at residues 148–168 (LAGA…IFFV) and 180–200 (IGTI…QFAI). Glu-205 is a Zn(2+) binding site.

This sequence belongs to the peptidase M48B family. The cofactor is Zn(2+).

It localises to the cell membrane. The chain is Protease HtpX homolog from Methanocaldococcus jannaschii (strain ATCC 43067 / DSM 2661 / JAL-1 / JCM 10045 / NBRC 100440) (Methanococcus jannaschii).